The sequence spans 86 residues: Anti-adapter protein IraP (86 aa).

The stretch at 1–36 (MKNLIAELLFKLAQKEEESKELCAQVEALEIIVTAM) forms a coiled coil.

This sequence belongs to the IraP family. Interacts with RssB.

The protein resides in the cytoplasm. In terms of biological role, inhibits RpoS proteolysis by regulating RssB activity, thereby increasing the stability of the sigma stress factor RpoS especially during phosphate starvation, but also in stationary phase and during nitrogen starvation. Its effect on RpoS stability is due to its interaction with RssB, which probably blocks the interaction of RssB with RpoS, and the consequent delivery of the RssB-RpoS complex to the ClpXP protein degradation pathway. This chain is Anti-adapter protein IraP, found in Shigella flexneri serotype 5b (strain 8401).